Here is a 103-residue protein sequence, read N- to C-terminus: Co-chaperonin GroES (103 aa).

Belongs to the GroES chaperonin family. Heptamer of 7 subunits arranged in a ring. Interacts with the chaperonin GroEL.

It localises to the cytoplasm. Its function is as follows. Together with the chaperonin GroEL, plays an essential role in assisting protein folding. The GroEL-GroES system forms a nano-cage that allows encapsulation of the non-native substrate proteins and provides a physical environment optimized to promote and accelerate protein folding. GroES binds to the apical surface of the GroEL ring, thereby capping the opening of the GroEL channel. The chain is Co-chaperonin GroES from Prochlorococcus marinus (strain SARG / CCMP1375 / SS120).